The following is a 513-amino-acid chain: MEMAKEQELILVLDFGSQYNQLITRRIREMGVYSELHDHEISIEEIKRMNPKGIILSGGPNSVYEEGSFTIDPEIYNLGIPVLGICYGMQLTTKLLGGKVERANEREYGKATINAKSDELFFGLPSEQTVWMSHSDKVIEIPEGFEVIADSPSTNYAAIEDKKRRIYGVQFHPEVRHTEYGNDLLRNFVRRVCNCTGEWTMENFIEIEIEKIRQQVGNRKVLCAMSGGVDSSVVAVLLHKAIGDQLTCIFVDHGLLRKGEGDMVMEQFGEGFDMNIIRVNAQERFMSKLKGVSDPERKRKIIGNEFVYVFDDEAAKLTDVDFLAQGTLYTDVIESGTKTAQTIKSHHNVGGLPEDMEFELIEPINTLFKDEVRALGIELGIPEHLVWRQPFPGPGLGIRVLGEITEDKLEIVRESDAILREVIREEGLERDIWQYFTVLPGIQSVGVMGDYRTYDHTVGIRAVTSIDGMTSDFARIDWEVLQKISSRIVNEVDHVNRVVYDITSKPPSTIEWE.

The 190-residue stretch at 9 to 198 (LILVLDFGSQ…VRRVCNCTGE (190 aa)) folds into the Glutamine amidotransferase type-1 domain. Cys-86 acts as the Nucleophile in catalysis. Catalysis depends on residues His-172 and Glu-174. Positions 199–388 (WTMENFIEIE…LGIPEHLVWR (190 aa)) constitute a GMPS ATP-PPase domain. 226 to 232 (SGGVDSS) provides a ligand contact to ATP.

In terms of assembly, homodimer.

It catalyses the reaction XMP + L-glutamine + ATP + H2O = GMP + L-glutamate + AMP + diphosphate + 2 H(+). It participates in purine metabolism; GMP biosynthesis; GMP from XMP (L-Gln route): step 1/1. In terms of biological role, catalyzes the synthesis of GMP from XMP. This is GMP synthase [glutamine-hydrolyzing] from Staphylococcus epidermidis (strain ATCC 35984 / DSM 28319 / BCRC 17069 / CCUG 31568 / BM 3577 / RP62A).